Reading from the N-terminus, the 283-residue chain is MPELPEVETVRRGLEPAMAGRLISEARVNRPDLRWPLPPRMAERLTGQRVLRLRRRSKYILADLSGGESLLIHLGMSGRMLVSGARVGDFVHDHPAPARHDHVVLEMEGGARVTFNDARRFGAMDLVPTEAAETHPLLASLGPEPLGNAFDGAYLAARLTGRRTPVKAALLDQRIVAGLGNIYVCEVLFRAGLAPVRLAGSLGEARAAGLVPIIREVLSEAIEAGGSSLRDYRQADGELGYFQHTFRVYGREGQPCVTPGCRGLVGRIVQSGRSSFHCPECQR.

Residue proline 2 is the Schiff-base intermediate with DNA of the active site. The active-site Proton donor is the glutamate 3. Lysine 58 acts as the Proton donor; for beta-elimination activity in catalysis. Positions 100, 119, and 162 each coordinate DNA. The FPG-type zinc finger occupies 247–283 (RVYGREGQPCVTPGCRGLVGRIVQSGRSSFHCPECQR). Arginine 273 (proton donor; for delta-elimination activity) is an active-site residue.

Belongs to the FPG family. As to quaternary structure, monomer. Zn(2+) is required as a cofactor.

The catalysed reaction is Hydrolysis of DNA containing ring-opened 7-methylguanine residues, releasing 2,6-diamino-4-hydroxy-5-(N-methyl)formamidopyrimidine.. It catalyses the reaction 2'-deoxyribonucleotide-(2'-deoxyribose 5'-phosphate)-2'-deoxyribonucleotide-DNA = a 3'-end 2'-deoxyribonucleotide-(2,3-dehydro-2,3-deoxyribose 5'-phosphate)-DNA + a 5'-end 5'-phospho-2'-deoxyribonucleoside-DNA + H(+). Involved in base excision repair of DNA damaged by oxidation or by mutagenic agents. Acts as a DNA glycosylase that recognizes and removes damaged bases. Has a preference for oxidized purines, such as 7,8-dihydro-8-oxoguanine (8-oxoG). Has AP (apurinic/apyrimidinic) lyase activity and introduces nicks in the DNA strand. Cleaves the DNA backbone by beta-delta elimination to generate a single-strand break at the site of the removed base with both 3'- and 5'-phosphates. The protein is Formamidopyrimidine-DNA glycosylase of Cereibacter sphaeroides (strain ATCC 17025 / ATH 2.4.3) (Rhodobacter sphaeroides).